A 485-amino-acid chain; its full sequence is Otoconin-90 (485 aa).

Residues 1-17 (MIMLLMVGMLMAPCVGA) form the signal peptide. N-linked (GlcNAc...) asparagine glycosylation is present at Asn-37. The tract at residues 75–189 (LLQFVNSMRC…SLNFLDASFC (115 aa)) is phospholipase A2-like 1. Cystine bridges form between Cys-84–Cys-144, Cys-98–Cys-189, Cys-100–Cys-116, Cys-115–Cys-171, Cys-122–Cys-164, Cys-131–Cys-157, and Cys-151–Cys-162. Asn-178 and Asn-288 each carry an N-linked (GlcNAc...) asparagine glycan. Phospholipase A2-like regions lie at residues 315–371 (MLQL…QVGC) and 383–435 (CEDH…PVSC). N-linked (GlcNAc...) asparagine glycosylation is present at Asn-417. Positions 444–485 (LASSVDSSSEENSEEAPPQMERLRRFLEKPPGPLGARPLGGK) are disordered.

The protein belongs to the phospholipase A2 family. In terms of assembly, interacts with OTOL1. As to expression, in the embryo, highly expressed in the developing otocyst with weak expression in the brain. Also expressed in nonsensory epithelia of both the vestibular and cochlear portions of the developing inner ear. Not expressed in adult or embryonic macular sensory epithelia.

It is found in the secreted. Major protein of the otoconia, a calcium carbonate structure in the saccule and utricle of the ear. Together with OTOL1, acts as a scaffold for otoconia biomineralization: sequesters calcium and forms interconnecting fibrils between otoconia that are incorporated into the calcium crystal structure. Together with OTOL1, modulates calcite crystal morphology and growth kinetics. It is unlikely that this protein has phospholipase A2 activity. This is Otoconin-90 from Mus musculus (Mouse).